The primary structure comprises 629 residues: tRNA uridine 5-carboxymethylaminomethyl modification enzyme MnmG (629 aa).

FAD is bound by residues 13–18 (GGGHAG), Val-125, and Ser-180. 273 to 287 (GPRYCPSIEDKIHRF) is a binding site for NAD(+). Gln-370 is a binding site for FAD.

The protein belongs to the MnmG family. Homodimer. Heterotetramer of two MnmE and two MnmG subunits. FAD serves as cofactor.

The protein resides in the cytoplasm. Its function is as follows. NAD-binding protein involved in the addition of a carboxymethylaminomethyl (cmnm) group at the wobble position (U34) of certain tRNAs, forming tRNA-cmnm(5)s(2)U34. The protein is tRNA uridine 5-carboxymethylaminomethyl modification enzyme MnmG of Shewanella oneidensis (strain ATCC 700550 / JCM 31522 / CIP 106686 / LMG 19005 / NCIMB 14063 / MR-1).